The primary structure comprises 358 residues: DNA replication and repair protein RecF (358 aa).

Residue 30–37 (GNNGSGKT) participates in ATP binding.

The protein belongs to the RecF family.

It localises to the cytoplasm. In terms of biological role, the RecF protein is involved in DNA metabolism; it is required for DNA replication and normal SOS inducibility. RecF binds preferentially to single-stranded, linear DNA. It also seems to bind ATP. The protein is DNA replication and repair protein RecF of Actinobacillus succinogenes (strain ATCC 55618 / DSM 22257 / CCUG 43843 / 130Z).